The following is a 166-amino-acid chain: Thiamine precursor transporter HmpT (166 aa).

Transmembrane regions (helical) follow at residues 14 to 34 (LLAI…FPIP), 35 to 55 (GSAG…VFLF), 62 to 82 (IIGG…NYMF), 105 to 125 (FLLS…LMYG), and 126 to 146 (WGSA…GFVL).

As to quaternary structure, in E.coli forms a stable energy-coupling factor (ECF) transporter complex composed of 2 membrane-embedded substrate-binding protein (S component), 2 ATP-binding proteins (A and A' components) and 2 transmembrane proteins (T component), probably with a stoichiometry of 2:1:1:2. May be able to interact with more than 1 S component at a time.

The protein localises to the cell membrane. Functionally, probably a thiamine precursor-binding protein that interacts with the energy-coupling factor (ECF) ABC-transporter complex. Unlike classic ABC transporters this ECF transporter provides the energy necessary to transport a number of different substrates. The substrates themselves are bound by transmembrane, not extracytoplasmic soluble proteins. This Lactococcus lactis subsp. cremoris (strain MG1363) protein is Thiamine precursor transporter HmpT (hmpT).